The chain runs to 57 residues: Small nuclear protein PRAC1 (57 aa).

Residues 38–57 (RSDGSACNSGISGGRGRKIP) form a disordered region.

In terms of tissue distribution, highly expressed in prostate, rectum, and distal colon, and weakly expressed in bladder. Expressed in prostate cancer cell lines.

It localises to the nucleus. This is Small nuclear protein PRAC1 (PRAC1) from Homo sapiens (Human).